Reading from the N-terminus, the 256-residue chain is 5-keto-4-deoxy-D-glucarate aldolase (256 aa).

The active-site Proton acceptor is the His50. Position 151 (Gln151) interacts with substrate. Glu153 contacts Mg(2+). Positions 178 and 179 each coordinate substrate. Mg(2+) is bound at residue Asp179.

The protein belongs to the HpcH/HpaI aldolase family. KDGluc aldolase subfamily. As to quaternary structure, homohexamer; trimer of dimers. The cofactor is Mg(2+).

It carries out the reaction 5-dehydro-4-deoxy-D-glucarate = 2-hydroxy-3-oxopropanoate + pyruvate. It catalyses the reaction 2-dehydro-3-deoxy-D-glucarate = 2-hydroxy-3-oxopropanoate + pyruvate. It functions in the pathway carbohydrate acid metabolism; galactarate degradation; D-glycerate from galactarate: step 2/3. Its function is as follows. Catalyzes the reversible retro-aldol cleavage of both 5-keto-4-deoxy-D-glucarate and 2-keto-3-deoxy-D-glucarate to pyruvate and tartronic semialdehyde. In Escherichia coli O157:H7 (strain EC4115 / EHEC), this protein is 5-keto-4-deoxy-D-glucarate aldolase.